A 507-amino-acid polypeptide reads, in one-letter code: Dolichyl pyrophosphate Man9GlcNAc2 alpha-1,3-glucosyltransferase (507 aa).

Residues 1-2 lie on the Cytoplasmic side of the membrane; sequence ME. Residues 3–23 traverse the membrane as a helical segment; that stretch reads SWTWMTVVVLLGLTVRWTVSL. Over 24–114 the chain is Lumenal; sequence NSYSGAGKPP…SQAHKLFMRT (91 aa). A glycan (N-linked (GlcNAc...) asparagine) is linked at Asn-59. The helical transmembrane segment at 115-135 threads the bilayer; sequence TVLAADLLIYIPAVLLYCYSL. Over 136 to 143 the chain is Cytoplasmic; sequence KEISPKRK. The chain crosses the membrane as a helical span at residues 144–164; that stretch reads IASALCILLYPGLILIDYGHF. The Lumenal portion of the chain corresponds to 165-172; that stretch reads QYNSVSLG. Residues 173-193 form a helical membrane-spanning segment; that stretch reads FALWGVLGVSCDWDLLGSLAF. Topologically, residues 194-229 are cytoplasmic; that stretch reads CLALNYKQMELYHSLPFFCFLLGKCFKKGLRGKGSA. The chain crosses the membrane as a helical span at residues 230–250; the sequence is LFIRIACTVVASFLLCWLPFL. The Lumenal portion of the chain corresponds to 251–297; that stretch reads TEREHALQVVRRLFPVDRGLFEDKVANIWCSLNVFLKIKDILPRHIQ. Residues 298-318 form a helical membrane-spanning segment; that stretch reads IAISFCFTFLSLLPACIKLTV. The Cytoplasmic portion of the chain corresponds to 319-332; it reads QPSAKGFRFTLVSC. The helical transmembrane segment at 333-353 threads the bilayer; that stretch reads ALSFFLFSFQVHEKSILLVSL. Over 354-361 the chain is Lumenal; it reads PVCLVLTE. Residues 362–382 form a helical membrane-spanning segment; it reads IPFMSTWFLLVSTFSMLPLLL. Over 383–385 the chain is Cytoplasmic; the sequence is KDQ. The chain crosses the membrane as a helical span at residues 386-406; it reads LLLPSVVTVMAFLIACSTFFP. The Lumenal segment spans residues 407-437; sequence MFENTSEEQLQLKSFAVSVRRHLPGFTFLPR. The helical transmembrane segment at 438 to 458 threads the bilayer; the sequence is IIQCLFLSSVITMILLTILSV. At 459–468 the chain is on the cytoplasmic side; the sequence is TLDPPQKLPD. Residues 469 to 489 traverse the membrane as a helical segment; the sequence is LFSVLICFVSCVNFVFFLVYF. The Lumenal portion of the chain corresponds to 490-507; it reads NIVIMWDSKNGRNRKKID.

The protein belongs to the ALG6/ALG8 glucosyltransferase family.

It is found in the endoplasmic reticulum membrane. It carries out the reaction an alpha-D-Man-(1-&gt;2)-alpha-D-Man-(1-&gt;2)-alpha-D-Man-(1-&gt;3)-[alpha-D-Man-(1-&gt;2)-alpha-D-Man-(1-&gt;3)-[alpha-D-Man-(1-&gt;2)-alpha-D-Man-(1-&gt;6)]-alpha-D-Man-(1-&gt;6)]-beta-D-Man-(1-&gt;4)-beta-D-GlcNAc-(1-&gt;4)-alpha-D-GlcNAc-diphospho-di-trans,poly-cis-dolichol + a di-trans,poly-cis-dolichyl beta-D-glucosyl phosphate = an alpha-D-Glc-(1-&gt;3)-alpha-D-Man-(1-&gt;2)-alpha-D-Man-(1-&gt;2)-alpha-D-Man-(1-&gt;3)-[alpha-D-Man-(1-&gt;2)-alpha-D-Man-(1-&gt;3)-[alpha-D-Man-(1-&gt;2)-alpha-D-Man-(1-&gt;6)]-alpha-D-Man-(1-&gt;6)]-beta-D-Man-(1-&gt;4)-beta-D-GlcNAc-(1-&gt;4)-alpha-D-GlcNAc-diphospho-di-trans,poly-cis-dolichol + a di-trans,poly-cis-dolichyl phosphate + H(+). It participates in protein modification; protein glycosylation. Dolichyl pyrophosphate Man9GlcNAc2 alpha-1,3-glucosyltransferase that operates in the biosynthetic pathway of dolichol-linked oligosaccharides, the glycan precursors employed in protein asparagine (N)-glycosylation. The assembly of dolichol-linked oligosaccharides begins on the cytosolic side of the endoplasmic reticulum membrane and finishes in its lumen. The sequential addition of sugars to dolichol pyrophosphate produces dolichol-linked oligosaccharides containing fourteen sugars, including two GlcNAcs, nine mannoses and three glucoses. Once assembled, the oligosaccharide is transferred from the lipid to nascent proteins by oligosaccharyltransferases. In the lumen of the endoplasmic reticulum, adds the first glucose residue from dolichyl phosphate glucose (Dol-P-Glc) onto the lipid-linked oligosaccharide intermediate Man(9)GlcNAc(2)-PP-Dol to produce Glc(1)Man(9)GlcNAc(2)-PP-Dol. Glc(1)Man(9)GlcNAc(2)-PP-Dol is a substrate for ALG8, the following enzyme in the biosynthetic pathway. This chain is Dolichyl pyrophosphate Man9GlcNAc2 alpha-1,3-glucosyltransferase, found in Rattus norvegicus (Rat).